We begin with the raw amino-acid sequence, 295 residues long: Nucleotide-binding protein Lxx11490 (295 aa).

19-26 lines the ATP pocket; it reads GMSGAGRS. Residue 70–73 coordinates GTP; that stretch reads DVRG.

It belongs to the RapZ-like family.

Displays ATPase and GTPase activities. The protein is Nucleotide-binding protein Lxx11490 of Leifsonia xyli subsp. xyli (strain CTCB07).